Reading from the N-terminus, the 279-residue chain is uncharacterized protein (279 aa).

Belongs to the peptidase C59 family.

This is an uncharacterized protein from Chlorella (PBCV-1).